The following is a 258-amino-acid chain: MKRIAMLAAACVIAVPAFAQNVATVNGKPITQKSLDEFVKLVVSQGATDSPQLREQIKQEMINRQVFVQAAEKDGVAKQADVQTEIELARQGILVRALMADYLQKHPVTDAQVKAEYEKIKKEQAGKMEYKVRHILVEDEKTANDLLAQVKSNKSKFDDLAKKNSKDPGSAERGGDLGWAPATNYVQPFAEAVTKLKKGQLVDKPVQTQFGWHVIQVDDTRPVEFPAMDQVRPQLEEMLRQQTLANYQKQLREQAKIQ.

A signal peptide spans 1 to 19 (MKRIAMLAAACVIAVPAFA). In terms of domain architecture, PpiC spans 127–219 (KMEYKVRHIL…FGWHVIQVDD (93 aa)). A compositionally biased stretch (basic and acidic residues) spans 158 to 175 (DDLAKKNSKDPGSAERGG). Residues 158–178 (DDLAKKNSKDPGSAERGGDLG) are disordered.

It belongs to the PpiC/parvulin rotamase family.

The catalysed reaction is [protein]-peptidylproline (omega=180) = [protein]-peptidylproline (omega=0). In Bordetella bronchiseptica (strain ATCC BAA-588 / NCTC 13252 / RB50) (Alcaligenes bronchisepticus), this protein is Probable parvulin-type peptidyl-prolyl cis-trans isomerase.